The primary structure comprises 392 residues: Selenide, water dikinase 1 (392 aa).

The active site involves Cys31. Residues Lys32, 67 to 69 (GMD), Asp87, Asp110, and 161 to 164 (GGQT) contribute to the ATP site. Asp69 serves as a coordination point for Mg(2+). Asp110 provides a ligand contact to Mg(2+). Mg(2+) is bound at residue Asp265.

Belongs to the selenophosphate synthase 1 family. Class II subfamily. Homodimer. Mg(2+) serves as cofactor.

It is found in the cell membrane. Its subcellular location is the nucleus membrane. It carries out the reaction hydrogenselenide + ATP + H2O = selenophosphate + AMP + phosphate + 2 H(+). Synthesizes selenophosphate from selenide and ATP. The chain is Selenide, water dikinase 1 (sephs1) from Xenopus tropicalis (Western clawed frog).